Consider the following 147-residue polypeptide: SsrA-binding protein (147 aa).

The interval 119–147 (AKGKKQHDKRESEKQKEWERDKQRLMRPK) is disordered. Residues 126-147 (DKRESEKQKEWERDKQRLMRPK) are compositionally biased toward basic and acidic residues.

It belongs to the SmpB family.

Its subcellular location is the cytoplasm. Required for rescue of stalled ribosomes mediated by trans-translation. Binds to transfer-messenger RNA (tmRNA), required for stable association of tmRNA with ribosomes. tmRNA and SmpB together mimic tRNA shape, replacing the anticodon stem-loop with SmpB. tmRNA is encoded by the ssrA gene; the 2 termini fold to resemble tRNA(Ala) and it encodes a 'tag peptide', a short internal open reading frame. During trans-translation Ala-aminoacylated tmRNA acts like a tRNA, entering the A-site of stalled ribosomes, displacing the stalled mRNA. The ribosome then switches to translate the ORF on the tmRNA; the nascent peptide is terminated with the 'tag peptide' encoded by the tmRNA and targeted for degradation. The ribosome is freed to recommence translation, which seems to be the essential function of trans-translation. In Nitrosospira multiformis (strain ATCC 25196 / NCIMB 11849 / C 71), this protein is SsrA-binding protein.